Here is a 538-residue protein sequence, read N- to C-terminus: Putative outer membrane porin BglH (538 aa).

A signal peptide spans 1 to 25; sequence MFRRNIITSAILLMAPLAFSAQSLA.

The protein belongs to the porin LamB (TC 1.B.3) family.

Its subcellular location is the cell outer membrane. In terms of biological role, may be a sugar porin with a broad carbohydrate specificity. The protein is Putative outer membrane porin BglH (bglH) of Escherichia coli O6:K15:H31 (strain 536 / UPEC).